Consider the following 124-residue polypeptide: Small ribosomal subunit protein uS12 (124 aa).

Asp89 carries the post-translational modification 3-methylthioaspartic acid.

Belongs to the universal ribosomal protein uS12 family. In terms of assembly, part of the 30S ribosomal subunit. Contacts proteins S8 and S17. May interact with IF1 in the 30S initiation complex.

With S4 and S5 plays an important role in translational accuracy. Its function is as follows. Interacts with and stabilizes bases of the 16S rRNA that are involved in tRNA selection in the A site and with the mRNA backbone. Located at the interface of the 30S and 50S subunits, it traverses the body of the 30S subunit contacting proteins on the other side and probably holding the rRNA structure together. The combined cluster of proteins S8, S12 and S17 appears to hold together the shoulder and platform of the 30S subunit. The sequence is that of Small ribosomal subunit protein uS12 from Aeromonas hydrophila subsp. hydrophila (strain ATCC 7966 / DSM 30187 / BCRC 13018 / CCUG 14551 / JCM 1027 / KCTC 2358 / NCIMB 9240 / NCTC 8049).